The sequence spans 264 residues: S-adenosylmethionine decarboxylase proenzyme (264 aa).

Ser-113 functions as the Schiff-base intermediate with substrate; via pyruvic acid in the catalytic mechanism. A Pyruvic acid (Ser); by autocatalysis modification is found at Ser-113. His-118 (proton acceptor; for processing activity) is an active-site residue. Cys-141 functions as the Proton donor; for catalytic activity in the catalytic mechanism.

Belongs to the prokaryotic AdoMetDC family. Type 2 subfamily. Heterooctamer of four alpha and four beta chains arranged as a tetramer of alpha/beta heterodimers. Pyruvate serves as cofactor. In terms of processing, is synthesized initially as an inactive proenzyme. Formation of the active enzyme involves a self-maturation process in which the active site pyruvoyl group is generated from an internal serine residue via an autocatalytic post-translational modification. Two non-identical subunits are generated from the proenzyme in this reaction, and the pyruvate is formed at the N-terminus of the alpha chain, which is derived from the carboxyl end of the proenzyme. The post-translation cleavage follows an unusual pathway, termed non-hydrolytic serinolysis, in which the side chain hydroxyl group of the serine supplies its oxygen atom to form the C-terminus of the beta chain, while the remainder of the serine residue undergoes an oxidative deamination to produce ammonia and the pyruvoyl group blocking the N-terminus of the alpha chain.

The enzyme catalyses S-adenosyl-L-methionine + H(+) = S-adenosyl 3-(methylsulfanyl)propylamine + CO2. Its pathway is amine and polyamine biosynthesis; S-adenosylmethioninamine biosynthesis; S-adenosylmethioninamine from S-adenosyl-L-methionine: step 1/1. Its function is as follows. Catalyzes the decarboxylation of S-adenosylmethionine to S-adenosylmethioninamine (dcAdoMet), the propylamine donor required for the synthesis of the polyamines spermine and spermidine from the diamine putrescine. The polypeptide is S-adenosylmethionine decarboxylase proenzyme (Xanthomonas euvesicatoria pv. vesicatoria (strain 85-10) (Xanthomonas campestris pv. vesicatoria)).